We begin with the raw amino-acid sequence, 360 residues long: Photosystem II protein D1 2 (360 aa).

Helical transmembrane passes span Y29 to I46, H118 to F133, and W142 to A156. H118 is a binding site for chlorophyll a. A pheophytin a-binding site is contributed by Y126. 2 residues coordinate [CaMn4O5] cluster: D170 and E189. The chain crosses the membrane as a helical span at residues L197–L218. Residue H198 coordinates chlorophyll a. Residues H215 and S264–F265 contribute to the a quinone site. Position 215 (H215) interacts with Fe cation. H272 lines the Fe cation pocket. The helical transmembrane segment at F274–L288 threads the bilayer. Positions 332, 333, 342, and 344 each coordinate [CaMn4O5] cluster. Residues G345 to G360 constitute a propeptide that is removed on maturation.

It belongs to the reaction center PufL/M/PsbA/D family. As to quaternary structure, PSII is composed of 1 copy each of membrane proteins PsbA, PsbB, PsbC, PsbD, PsbE, PsbF, PsbH, PsbI, PsbJ, PsbK, PsbL, PsbM, PsbT, PsbX, Psb30/Ycf12, peripheral proteins PsbO, CyanoQ (PsbQ), PsbU, PsbV and a large number of cofactors. It forms dimeric complexes. The D1/D2 heterodimer binds P680, chlorophylls that are the primary electron donor of PSII, and subsequent electron acceptors. It shares a non-heme iron and each subunit binds pheophytin, quinone, additional chlorophylls, carotenoids and lipids. D1 provides most of the ligands for the Mn4-Ca-O5 cluster of the oxygen-evolving complex (OEC). There is also a Cl(-1) ion associated with D1 and D2, which is required for oxygen evolution. The PSII complex binds additional chlorophylls, carotenoids and specific lipids. is required as a cofactor. In terms of processing, tyr-161 forms a radical intermediate that is referred to as redox-active TyrZ, YZ or Y-Z. C-terminally processed by CtpA; processing is essential to allow assembly of the oxygen-evolving complex and thus photosynthetic growth.

The protein localises to the cell inner membrane. It catalyses the reaction 2 a plastoquinone + 4 hnu + 2 H2O = 2 a plastoquinol + O2. Photosystem II (PSII) is a light-driven water:plastoquinone oxidoreductase that uses light energy to abstract electrons from H(2)O, generating O(2) and a proton gradient subsequently used for ATP formation. It consists of a core antenna complex that captures photons, and an electron transfer chain that converts photonic excitation into a charge separation. The D1/D2 (PsbA/PsbD) reaction center heterodimer binds P680, the primary electron donor of PSII as well as several subsequent electron acceptors. The protein is Photosystem II protein D1 2 of Gloeobacter violaceus (strain ATCC 29082 / PCC 7421).